The chain runs to 161 residues: Cystatin cpi-2 (161 aa).

Residues 1–25 (MMSTMSIKEGLLVILLSLFLFDTTA) form the signal peptide. The short motif at 76–78 (SND) is the Important for interaction with host LGMN element. The N-linked (GlcNAc...) asparagine glycan is linked to N89. The Secondary area of contact motif lies at 93 to 97 (QVVAG). An intrachain disulfide couples C111 to C124.

It belongs to the cystatin family.

Cysteine protease inhibitor which inhibits members of the peptidase C1 family. Also acts as an asparaginyl endopeptidase inhibitor. In the human host, inhibits CTSL/cathepsin L, CTSS/cathepsin S, CTSB/cathepsin B and asparaginyl endopeptidase LGMN/AEP which may cause defects in both antigen and MHC class II invariant chain CD74/Ii processing. In Brugia malayi (Filarial nematode worm), this protein is Cystatin cpi-2.